We begin with the raw amino-acid sequence, 586 residues long: Homothallic switching endonuclease (586 aa).

Positions 215–370 (MLGLWLGDST…IVHISRSLGM (156 aa)) constitute a DOD-type homing endonuclease domain.

Post-translationally, rapidly degraded via the ubiquitin-26S proteasome system through two ubiquitin-conjugating enzymes UBC2/RAD6 and UBC3/CDC34.

It localises to the nucleus. Initiation of mating type interconversion. This protein is a site-specific endonuclease that cleaves a site in the mat locus on chromosome III. The double-strand break is followed by a unidirectional gene conversion event that replaces the information at the mat locus by information copied from either of the two homologous loci (HMR and HML) that reside at the extremity of the chromosome III. Endonuclease expression takes place in late G1 just before cells enter S phase. The chain is Homothallic switching endonuclease (HO) from Saccharomyces cerevisiae (strain ATCC 204508 / S288c) (Baker's yeast).